A 279-amino-acid polypeptide reads, in one-letter code: Vomeronasal type-1 receptor A8 (279 aa).

Residues 1–19 (MNKDHTLYCSVYIRNAFFS) lie on the Extracellular side of the membrane. The helical transmembrane segment at 20-40 (EIGIGISANSCLLLFHTFMFI) threads the bilayer. The Cytoplasmic segment spans residues 41 to 49 (RGHRPRLTD). Residues 50-70 (LPIGFVALIHLVMLLLAAYIT) traverse the membrane as a helical segment. Over 71-93 (EDFFMSSGGWDDITCKLVIFLHR) the chain is Extracellular. Cys-85 and Cys-172 are joined by a disulfide. A helical membrane pass occupies residues 94-114 (FFRSLSVCATCLLSVFQAIIL). The Cytoplasmic segment spans residues 115-134 (CPQSSHLAKLKQNSPHQLSY). Residues 135-155 (FFIFLSIFYTSISSQILIAAI) form a helical membrane-spanning segment. Residues 156–159 (PTQN) lie on the Extracellular side of the membrane. Asn-159 carries an N-linked (GlcNAc...) asparagine glycan. A helical transmembrane segment spans residues 160–180 (ITFVNLIYITNSCSFLPLSSS). The Cytoplasmic segment spans residues 181–187 (MQHTFST). Residues 188–208 (LLTFRNVFVIGLMGLSTCYMA) traverse the membrane as a helical segment. Residues 209 to 238 (TLLCRHKTRSQRLQNSKLSPKATPEQRALR) lie on the Extracellular side of the membrane. The chain crosses the membrane as a helical span at residues 239 to 259 (TILMLMSFFLLMSTFDSIISY). At 260-279 (SRTIITGKSTALLCPDSCRS) the chain is on the cytoplasmic side.

Belongs to the G-protein coupled receptor 1 family. Expressed in a subset of sensory neurons located in the apical layer of the vomeronasal organ.

Its subcellular location is the cell membrane. Functionally, putative pheromone receptor implicated in the regulation of social and reproductive behavior. The sequence is that of Vomeronasal type-1 receptor A8 from Mus musculus (Mouse).